The sequence spans 325 residues: Ribose-phosphate pyrophosphokinase (325 aa).

ATP is bound by residues 45–47 and 104–105; these read NGE and RQ. Mg(2+) is bound by residues His-138 and Asp-178. Residue Lys-202 is part of the active site. Residues Arg-204, Asp-230, and 234 to 238 each bind D-ribose 5-phosphate; that span reads DTGGT.

It belongs to the ribose-phosphate pyrophosphokinase family. Class I subfamily. In terms of assembly, homohexamer. Mg(2+) is required as a cofactor.

The protein localises to the cytoplasm. It carries out the reaction D-ribose 5-phosphate + ATP = 5-phospho-alpha-D-ribose 1-diphosphate + AMP + H(+). It functions in the pathway metabolic intermediate biosynthesis; 5-phospho-alpha-D-ribose 1-diphosphate biosynthesis; 5-phospho-alpha-D-ribose 1-diphosphate from D-ribose 5-phosphate (route I): step 1/1. Involved in the biosynthesis of the central metabolite phospho-alpha-D-ribosyl-1-pyrophosphate (PRPP) via the transfer of pyrophosphoryl group from ATP to 1-hydroxyl of ribose-5-phosphate (Rib-5-P). This chain is Ribose-phosphate pyrophosphokinase, found in Corynebacterium efficiens (strain DSM 44549 / YS-314 / AJ 12310 / JCM 11189 / NBRC 100395).